We begin with the raw amino-acid sequence, 668 residues long: MDISEEKKRRIHELIEELNKYAYEYYVLDNPTVSDKEYDKRYDELVNLEKETGFVLSYSPTQRVGDTVLTQFDKYTHKSRLWSLDKAQNIEQLKEWINRNEKIIMEYNRLNEETLPMPTYILTKKFDGLTVNCTYDESGILVKGATRGTGIIGEDITSQVKTIKCLPLRIANNNLIEVRGEAIMTKEAFDKYNEKAEIPLKNLRNGAAGALRNLDVRETAKRNLSAFFYDIGYSEGNEFKTYMEMIGFLISMGFPVDPYIKECKDIVEIKDEIKYIEDIRNELNYDIDGIVIAINHIKTREVLGYTVKFPRWAIAYKFEAEEATTKLIDVEWNVGRSGRVTPTALLESVELGGATIKRATLNNMDDIIRKKVRLGAEVFIRRSNDVIPEIMGVVESSLENTEEIKAPLKCPYCESKLINEGVHLFCENTLSCKPQLVKSLVHFASREAMNIEGFSEKTAEQFYEELNIKSIGDLYRVKKEDLLTLDKFKEKKADNIMNAIENSKKPKLSSFIYALSIPNVGVKTARDLVKSFKTLDNIKNATIEELTSVKDIGEIVANSVIEFFKQENINESIKELLELGVTPIMDITEIKKDNKFNGKTIVVTGTLEGYTRNEIKEKLEALGAKVSGSVSKKTDFVLAGEEAGSKYNKAMELGIRIITEEEFNEMIN.

NAD(+)-binding positions include Asp-35–Asp-39 and Ser-83–Leu-84. The active-site N6-AMP-lysine intermediate is Lys-125. NAD(+)-binding residues include Arg-147, Glu-181, and Lys-317. The Zn(2+) site is built by Cys-410, Cys-413, Cys-426, and Cys-432. The BRCT domain maps to Lys-591–Asn-668.

The protein belongs to the NAD-dependent DNA ligase family. LigA subfamily. Mg(2+) is required as a cofactor. Requires Mn(2+) as cofactor.

It carries out the reaction NAD(+) + (deoxyribonucleotide)n-3'-hydroxyl + 5'-phospho-(deoxyribonucleotide)m = (deoxyribonucleotide)n+m + AMP + beta-nicotinamide D-nucleotide.. DNA ligase that catalyzes the formation of phosphodiester linkages between 5'-phosphoryl and 3'-hydroxyl groups in double-stranded DNA using NAD as a coenzyme and as the energy source for the reaction. It is essential for DNA replication and repair of damaged DNA. This is DNA ligase from Clostridium tetani (strain Massachusetts / E88).